A 274-amino-acid chain; its full sequence is Oxidized low-density lipoprotein receptor 1 (274 aa).

Residues 1–28 (MTLDDLKSNSMKDQPDEKSNGDKAEGPR) form a disordered region. Topologically, residues 1 to 37 (MTLDDLKSNSMKDQPDEKSNGDKAEGPRSLSTLRWRP) are cytoplasmic. Residues 13–26 (DQPDEKSNGDKAEG) are compositionally biased toward basic and acidic residues. The chain crosses the membrane as a helical; Signal-anchor for type II membrane protein span at residues 38 to 60 (AALILGLLCLGLLVTVILLIIQL). Cysteine 46 carries S-palmitoyl cysteine lipidation. The interval 61–150 (SQVSDLLKQQ…SGPCPQDWLW (90 aa)) is neck. Residues 61 to 274 (SQVSDLLKQQ…QKRANLLRAQ (214 aa)) are Extracellular-facing. Positions 89 to 142 (RQAEKSSQESQRELTEMIETLAHKLDEKSKKLMELQQQNLNLQKALEKAANFSG) form a coiled coil. An N-linked (GlcNAc...) asparagine glycan is attached at asparagine 139. 3 cysteine pairs are disulfide-bonded: cysteine 144-cysteine 155, cysteine 172-cysteine 264, and cysteine 243-cysteine 256. One can recognise a C-type lectin domain in the interval 151–265 (HEENCYKFSS…CILNAFSICQ (115 aa)).

In terms of assembly, homodimer; disulfide-linked. May form a hexamer composed of 3 homodimers. Interacts with HSP70. Post-translationally, N-glycosylated.

The protein resides in the cell membrane. It localises to the membrane raft. It is found in the secreted. In terms of biological role, receptor that mediates the recognition, internalization and degradation of oxidatively modified low density lipoprotein (oxLDL) by vascular endothelial cells. OxLDL is a marker of atherosclerosis that induces vascular endothelial cell activation and dysfunction, resulting in pro-inflammatory responses, pro-oxidative conditions and apoptosis. Its association with oxLDL induces the activation of NF-kappa-B through an increased production of intracellular reactive oxygen and a variety of pro-atherogenic cellular responses including a reduction of nitric oxide (NO) release, monocyte adhesion and apoptosis. In addition to binding oxLDL, it acts as a receptor for the HSP70 protein involved in antigen cross-presentation to naive T-cells in dendritic cells, thereby participating in cell-mediated antigen cross-presentation. Also involved in inflammatory process, by acting as a leukocyte-adhesion molecule at the vascular interface in endotoxin-induced inflammation. Also acts as a receptor for advanced glycation end (AGE) products, activated platelets, monocytes, apoptotic cells and both Gram-negative and Gram-positive bacteria. The sequence is that of Oxidized low-density lipoprotein receptor 1 (OLR1) from Sus scrofa (Pig).